The chain runs to 492 residues: Glutamyl-tRNA(Gln) amidotransferase subunit A (492 aa).

Catalysis depends on charge relay system residues lysine 80 and serine 155. The active-site Acyl-ester intermediate is serine 179.

The protein belongs to the amidase family. GatA subfamily. In terms of assembly, heterotrimer of A, B and C subunits.

It catalyses the reaction L-glutamyl-tRNA(Gln) + L-glutamine + ATP + H2O = L-glutaminyl-tRNA(Gln) + L-glutamate + ADP + phosphate + H(+). Allows the formation of correctly charged Gln-tRNA(Gln) through the transamidation of misacylated Glu-tRNA(Gln) in organisms which lack glutaminyl-tRNA synthetase. The reaction takes place in the presence of glutamine and ATP through an activated gamma-phospho-Glu-tRNA(Gln). The polypeptide is Glutamyl-tRNA(Gln) amidotransferase subunit A (Mycobacteroides abscessus (strain ATCC 19977 / DSM 44196 / CCUG 20993 / CIP 104536 / JCM 13569 / NCTC 13031 / TMC 1543 / L948) (Mycobacterium abscessus)).